The chain runs to 473 residues: Probable lipid II flippase MurJ (473 aa).

13 consecutive transmembrane segments (helical) span residues 31 to 51, 90 to 110, 125 to 145, 153 to 173, 177 to 197, 215 to 235, 253 to 273, 300 to 320, 327 to 347, 360 to 380, 382 to 402, 414 to 434, and 439 to 459; these read TFGA…PFFL, LVTL…ASIF, LIRL…FYSV, FLPA…CLFG, WAAA…LPFG, FFGT…DVNV, LYQL…LSTL, IGLM…GAFT, SAQI…FNLL, PFFA…ILGF, MGAS…FVFL, IFKI…LRGS, and LGTI…SKLL.

The protein belongs to the MurJ/MviN family.

It is found in the cell inner membrane. It participates in cell wall biogenesis; peptidoglycan biosynthesis. Its function is as follows. Involved in peptidoglycan biosynthesis. Transports lipid-linked peptidoglycan precursors from the inner to the outer leaflet of the cytoplasmic membrane. The protein is Probable lipid II flippase MurJ of Thermotoga maritima (strain ATCC 43589 / DSM 3109 / JCM 10099 / NBRC 100826 / MSB8).